The following is a 301-amino-acid chain: Probable alpha-L-glutamate ligase (301 aa).

The ATP-grasp domain occupies 104–287 (LQLLSRRGIG…VAGMIIEHLE (184 aa)). ATP is bound by residues lysine 141, 178 to 179 (EY), aspartate 187, and 211 to 213 (RSN). The Mg(2+) site is built by aspartate 248, glutamate 260, and asparagine 262. The Mn(2+) site is built by aspartate 248, glutamate 260, and asparagine 262.

This sequence belongs to the RimK family. Requires Mg(2+) as cofactor. It depends on Mn(2+) as a cofactor.

This chain is Probable alpha-L-glutamate ligase, found in Pseudomonas entomophila (strain L48).